The following is a 558-amino-acid chain: NAD-dependent malic enzyme 2 (558 aa).

The active-site Proton donor is the Tyr-101. Residue Arg-154 participates in NAD(+) binding. Catalysis depends on Lys-172, which acts as the Proton acceptor. Residues Glu-243, Asp-244, and Asp-267 each contribute to the a divalent metal cation site. NAD(+)-binding residues include Asp-267 and Asn-411.

It belongs to the malic enzymes family. As to quaternary structure, homotetramer. Mg(2+) is required as a cofactor. Requires Mn(2+) as cofactor.

The enzyme catalyses (S)-malate + NAD(+) = pyruvate + CO2 + NADH. It carries out the reaction oxaloacetate + H(+) = pyruvate + CO2. In Photobacterium profundum (strain SS9), this protein is NAD-dependent malic enzyme 2.